The primary structure comprises 596 residues: Inactive metallocarboxypeptidase ecm14 (596 aa).

Positions 1 to 26 (MSQSHSILSSLILLVAIIFCVPHVIA) are cleaved as a signal peptide. Residues 27–190 (VPWTTDGHAQ…SYPSMAYADA (164 aa)) constitute a propeptide that is removed on maturation. Asn114 is a glycosylation site (N-linked (GlcNAc...) asparagine). A Peptidase M14 domain is found at 220-540 (NYQPLSVIIP…NVIKYFGDFL (321 aa)). Zn(2+)-binding residues include His285 and Glu288. Residues 285 to 288 (HARE), Arg343, and 360 to 361 (DR) each bind substrate. Cys354 and Cys376 are oxidised to a cystine. Residue Asn400 is glycosylated (N-linked (GlcNAc...) asparagine). Zn(2+) is bound at residue His416. 417–418 (SY) provides a ligand contact to substrate.

It belongs to the peptidase M14 family. Zn(2+) serves as cofactor.

The protein localises to the vacuole. The protein resides in the secreted. Inactive carboxypeptidase that may play a role in cell wall organization and biogenesis. In Sclerotinia sclerotiorum (strain ATCC 18683 / 1980 / Ss-1) (White mold), this protein is Inactive metallocarboxypeptidase ecm14 (ecm14).